A 307-amino-acid polypeptide reads, in one-letter code: MARTPDDSWDLASSVGATATMVAAGRAVASADPDPLINDPYAEPLVRAVGLDFFTRMLDGELDLSVFPDSSPERAQAMIDGMAVRTRFFDDCCLAAASAGVRQVVILAAGLDARTYRLPWPDGTVVYELDQPDVIAFKTQTLRNLGAEPAATQRPVPVDLREDWPAALRAAGFDATRPTAWLAEGLLIYLPPEAQDALFDTVTALSAPGSTLATEYVPGIVDFDGAKARALSEPLREHGLDIDMPSLVYTGARTPVMDHLRGAGWQVSGTARAELFARFGRPLPQDADGTDPLGEIVYVSATLAADA.

S-adenosyl-L-methionine contacts are provided by residues D130 and 159 to 160 (DL).

The protein belongs to the UPF0677 family.

Functionally, exhibits S-adenosyl-L-methionine-dependent methyltransferase activity. The polypeptide is Putative S-adenosyl-L-methionine-dependent methyltransferase Mflv_5025 (Mycolicibacterium gilvum (strain PYR-GCK) (Mycobacterium gilvum (strain PYR-GCK))).